Reading from the N-terminus, the 1135-residue chain is Eukaryotic translation initiation factor 3 subunit A (1135 aa).

Residues 319–501 (LQRMAAHVLL…NSIYFGTDLT (183 aa)) enclose the PCI domain. 2 stretches are compositionally biased toward basic and acidic residues: residues 588–623 (QNNAREEEEARRQEEESRKAKLAEQKRLEQEQEERE) and 829–899 (AAEE…RGGD). Disordered regions lie at residues 588-631 (QNNA…QNEI) and 829-1135 (AAEE…VKRR). At Ser-908 the chain carries Phosphoserine. Basic and acidic residues-rich tracts occupy residues 920–971 (ERNE…EPDS), 985–1045 (SRDD…EPQR), 1053–1081 (DAPRNADRENRRPAGERRDRDVRETRGDQ), and 1104–1125 (AREEKPASKRDQPQEKENKAAD).

Belongs to the eIF-3 subunit A family. As to quaternary structure, component of the eukaryotic translation initiation factor 3 (eIF-3) complex. The eIF-3 complex interacts with pix.

It localises to the cytoplasm. In terms of biological role, RNA-binding component of the eukaryotic translation initiation factor 3 (eIF-3) complex, which is involved in protein synthesis of a specialized repertoire of mRNAs and, together with other initiation factors, stimulates binding of mRNA and methionyl-tRNAi to the 40S ribosome. The eIF-3 complex specifically targets and initiates translation of a subset of mRNAs involved in cell proliferation. This Drosophila erecta (Fruit fly) protein is Eukaryotic translation initiation factor 3 subunit A.